The following is a 757-amino-acid chain: RNA-directed RNA polymerase catalytic subunit (757 aa).

The interval 50–81 (SEKGKWTTNTETGAPQLNPIDGPLPENHEPSG) is disordered. Positions 55 to 64 (WTTNTETGAP) are enriched in polar residues. Short sequence motifs (nuclear localization signal) lie at residues 187–195 (RKRRIRDNM) and 203–216 (RTIGKKKQRLNKKS). The segment at 249–256 (RGFVYFVE) is promoter-binding site. The RdRp catalytic domain maps to 286 to 483 (VRKMMTNSQD…GINMSKKKSY (198 aa)).

It belongs to the influenza viruses polymerase PB1 family. As to quaternary structure, influenza RNA polymerase is composed of three subunits: PB1, PB2 and PA. Interacts (via N-terminus) with PA (via C-terminus). Interacts (via C-terminus) with PB2 (via N-terminus); this interaction is essential for transcription initiation. Post-translationally, phosphorylated by host PRKCA.

The protein localises to the host nucleus. It localises to the host cytoplasm. It catalyses the reaction RNA(n) + a ribonucleoside 5'-triphosphate = RNA(n+1) + diphosphate. Its function is as follows. RNA-dependent RNA polymerase which is responsible for replication and transcription of virus RNA segments. The transcription of viral mRNAs occurs by a unique mechanism called cap-snatching. 5' methylated caps of cellular mRNAs are cleaved after 10-13 nucleotides by PA. In turn, these short capped RNAs are used as primers by PB1 for transcription of viral mRNAs. During virus replication, PB1 initiates RNA synthesis and copy vRNA into complementary RNA (cRNA) which in turn serves as a template for the production of more vRNAs. The chain is RNA-directed RNA polymerase catalytic subunit from Influenza A virus (strain A/Silky Chicken/Hong Kong/YU100/2002 H5N1 genotype X3).